Reading from the N-terminus, the 641-residue chain is Chaperone protein DnaK (641 aa).

Threonine 200 carries the phosphothreonine; by autocatalysis modification. Residues 606 to 623 (AEQGGNADAASGNAQASK) are compositionally biased toward low complexity. The segment at 606-627 (AEQGGNADAASGNAQASKAADD) is disordered.

This sequence belongs to the heat shock protein 70 family.

In terms of biological role, acts as a chaperone. This Xanthomonas euvesicatoria pv. vesicatoria (strain 85-10) (Xanthomonas campestris pv. vesicatoria) protein is Chaperone protein DnaK.